Reading from the N-terminus, the 422-residue chain is Glycine amidinotransferase, mitochondrial (422 aa).

Residues 1–37 (MLRVRCLRGGSRGAEAVHYIGSMLRKSFVGWVQRSFQ) constitute a mitochondrion transit peptide. Active-site residues include aspartate 253 and histidine 302. Cysteine 406 acts as the Amidino-cysteine intermediate in catalysis.

Belongs to the amidinotransferase family. As to quaternary structure, homodimer. Ubiquitously expressed in adult tissues, with highest levels in muscle and intermediate levels in eye, heart, liver, stomach and testis. In stage 28 embryos, expression is higher in the dorsal and ventral parts of the trunk than in the head. In middle gastrulae, expression is highest around the yolk plug, while in stage 15 and tailbud stage embryos, expression is largely restricted to the region around the presumptive notochord and gut.

It localises to the mitochondrion inner membrane. It catalyses the reaction L-arginine + glycine = guanidinoacetate + L-ornithine. Its pathway is amine and polyamine biosynthesis; creatine biosynthesis; creatine from L-arginine and glycine: step 1/2. In terms of biological role, catalyzes the biosynthesis of guanidinoacetate, the immediate precursor of creatine. Creatine plays a vital role in energy metabolism in muscle tissues. May play a role in embryonic and central nervous system development. In Xenopus laevis (African clawed frog), this protein is Glycine amidinotransferase, mitochondrial.